The sequence spans 470 residues: D-serine/D-alanine/glycine transporter (470 aa).

12 consecutive transmembrane segments (helical) span residues 30–50 (LIAI…KTIS), 51–71 (LAGP…FFVM), 102–122 (FTGW…VVAI), 137–157 (VASL…VKMF), 162–182 (FWFA…GLVM), 211–231 (LSGF…IELV), 256–276 (IIMF…WSSV), 283–303 (FVEL…NFVV), 350–370 (FSCI…SVIG), 371–391 (AFTM…TIIL), 413–433 (PLGK…VVLL), and 441–461 (QALL…LFIG).

The protein belongs to the amino acid-polyamine-organocation (APC) superfamily. Amino acid transporter (AAT) (TC 2.A.3.1) family.

Its subcellular location is the cell inner membrane. It carries out the reaction D-alanine(in) + H(+)(in) = D-alanine(out) + H(+)(out). It catalyses the reaction D-serine(out) + H(+)(out) = D-serine(in) + H(+)(in). The catalysed reaction is glycine(in) + H(+)(in) = glycine(out) + H(+)(out). Its function is as follows. Permease that is involved in the transport across the cytoplasmic membrane of D-alanine, D-serine and glycine. This is D-serine/D-alanine/glycine transporter (cycA) from Escherichia coli O157:H7.